A 276-amino-acid chain; its full sequence is Large ribosomal subunit protein uL2 (276 aa).

Disordered regions lie at residues 30–57 (EKSL…QGGG) and 219–276 (TVRG…RSKK).

This sequence belongs to the universal ribosomal protein uL2 family. As to quaternary structure, part of the 50S ribosomal subunit. Forms a bridge to the 30S subunit in the 70S ribosome.

In terms of biological role, one of the primary rRNA binding proteins. Required for association of the 30S and 50S subunits to form the 70S ribosome, for tRNA binding and peptide bond formation. It has been suggested to have peptidyltransferase activity; this is somewhat controversial. Makes several contacts with the 16S rRNA in the 70S ribosome. The protein is Large ribosomal subunit protein uL2 of Exiguobacterium sibiricum (strain DSM 17290 / CCUG 55495 / CIP 109462 / JCM 13490 / 255-15).